The following is a 271-amino-acid chain: MNQWRVIHNKSYEGAMNMAIDEAIFTAYKKGHNKPTLRFYTWEPACLSIGYFQKLEDEIDLDKCRCMNIDYTRRITGGRAVLHDNELTYSIIIGEDNPLIDKSINLSYRYISEGLVKGLNLSGIETDNLNRGERISRENLSAACFNAHASYEVTINNKKVIGSAQSRKDGVLLQHGSIILDFDVEKLFKLIKTKTPELKERAMKFTAKKASGIENEIGRKIDIDILQKNIVKGLAEQFNVEFVEGDLTDYEKQLVKELYEKYKNEEYNKKR.

Positions 31 to 242 (GHNKPTLRFY…GLAEQFNVEF (212 aa)) constitute a BPL/LPL catalytic domain. The active-site Acyl-thioester intermediate is the Cys144.

The protein belongs to the octanoyltransferase LipM family. As to quaternary structure, monomer.

The enzyme catalyses octanoyl-[ACP] + L-lysyl-[protein] = N(6)-octanoyl-L-lysyl-[protein] + holo-[ACP] + H(+). It functions in the pathway protein modification; protein lipoylation via endogenous pathway; protein N(6)-(lipoyl)lysine from octanoyl-[acyl-carrier-protein]. Functionally, catalyzes the transfer of endogenously produced octanoic acid from octanoyl-acyl-carrier-protein onto the lipoyl domain of GcvH, an intermediate carrier during protein lipoylation. This is Octanoyltransferase LipM from Clostridioides difficile (strain 630) (Peptoclostridium difficile).